Consider the following 361-residue polypeptide: tRNA/tmRNA (uracil-C(5))-methyltransferase (361 aa).

Residues Gln-185, Tyr-213, Asn-218, Glu-234, and Asp-294 each contribute to the S-adenosyl-L-methionine site. Cys-319 functions as the Nucleophile in the catalytic mechanism. Catalysis depends on Glu-353, which acts as the Proton acceptor.

Belongs to the class I-like SAM-binding methyltransferase superfamily. RNA M5U methyltransferase family. TrmA subfamily.

The enzyme catalyses uridine(54) in tRNA + S-adenosyl-L-methionine = 5-methyluridine(54) in tRNA + S-adenosyl-L-homocysteine + H(+). It carries out the reaction uridine(341) in tmRNA + S-adenosyl-L-methionine = 5-methyluridine(341) in tmRNA + S-adenosyl-L-homocysteine + H(+). Its function is as follows. Dual-specificity methyltransferase that catalyzes the formation of 5-methyluridine at position 54 (m5U54) in all tRNAs, and that of position 341 (m5U341) in tmRNA (transfer-mRNA). The sequence is that of tRNA/tmRNA (uracil-C(5))-methyltransferase from Pseudomonas putida (strain ATCC 47054 / DSM 6125 / CFBP 8728 / NCIMB 11950 / KT2440).